The primary structure comprises 131 residues: Antitoxin MqsA (131 aa).

The Zn(2+) site is built by Cys-3, Cys-6, Cys-37, and Cys-40. The 54-residue stretch at 74–127 (IVKVRKKLSLTQKEASEIFGGGVNAFSRYEKGNAQPHPSTIKLLRVLDKHPELL) folds into the HTH cro/C1-type domain. The H-T-H motif DNA-binding region spans 85–104 (QKEASEIFGGGVNAFSRYEK).

In terms of assembly, homodimer. Crystallizes as a heterotetramer with MqsA, MqsR-MqsA(2)-MqsR. Purifies as a probable heterohexamer of 2 MqsR dimers and 1 MqsA dimer. Binds promoter DNA as a dimer. When the 2 dissociate the MsqR mRNA interferase becomes active. Zn(2+) is required as a cofactor. In terms of processing, degraded in the presence of oxidative stress, maybe by the Lon and/or ClpX proteases.

Its function is as follows. Antitoxin component of a type II toxin-antitoxin (TA) system. Labile antitoxin that binds to the MqsR mRNA interferase toxin and neutralizes its endoribonuclease activity. Overexpression prevents MqsR-mediated cessation of cell growth and inhibition of cell proliferation. Initially reported to act as a cotranscription factor with MqsA. Following further experiments, the MqsR-MqsA complex does not bind DNA and all reported data are actually due to a small fraction of free MqsA alone binding DNA. Addition of MqsR to a preformed MqsA-promoter DNA complex causes dissociation of the MqsA-DNA complex, probably causing derepression of MqsA-repressed transcripts. MqsA binds to 2 palindromes in the promoter region of the mqsRA operon activating its transcription. Binds to other promoters, inducing mcbR and spy and repressing cspD among others. Binds to and represses the rpoS promoter, the master stress regulator, resulting in decreased cyclic-di-GMP, reduced stress resistance, increased cell motility and decreased biofilm formation; in these experiments 5 TA systems are missing (lacks MazEF, RelEB, ChpB, YoeB-YefM, YafQ-DinJ). An earlier study showed overexpression alone increases biofilm formation, perhaps by repressing cspD; in these experiments the 5 TA systems are present. Represses the csgD promoter. In the presence of stress, when this protein is degraded, the promoters it represses are derepressed, leading to biofilm formation. This TA system mediates cell growth during bile acid deoxycholate stress by degrading mRNA for probable deoxycholate-binding protein YgiS; bile acid detergents such as deoxycholate are important for host defense against bacterial growth in the gall bladder and duodenum. This is Antitoxin MqsA from Escherichia coli (strain K12).